The sequence spans 139 residues: Putative pre-16S rRNA nuclease (139 aa).

The protein belongs to the YqgF nuclease family.

The protein localises to the cytoplasm. In terms of biological role, could be a nuclease involved in processing of the 5'-end of pre-16S rRNA. This Rubrobacter xylanophilus (strain DSM 9941 / JCM 11954 / NBRC 16129 / PRD-1) protein is Putative pre-16S rRNA nuclease.